We begin with the raw amino-acid sequence, 430 residues long: UDP-N-acetylmuramoylalanine--D-glutamate ligase (430 aa).

Residue 109–115 participates in ATP binding; the sequence is GTDGKST.

The protein belongs to the MurCDEF family.

Its subcellular location is the cytoplasm. It carries out the reaction UDP-N-acetyl-alpha-D-muramoyl-L-alanine + D-glutamate + ATP = UDP-N-acetyl-alpha-D-muramoyl-L-alanyl-D-glutamate + ADP + phosphate + H(+). It participates in cell wall biogenesis; peptidoglycan biosynthesis. Cell wall formation. Catalyzes the addition of glutamate to the nucleotide precursor UDP-N-acetylmuramoyl-L-alanine (UMA). This is UDP-N-acetylmuramoylalanine--D-glutamate ligase from Thermotoga maritima (strain ATCC 43589 / DSM 3109 / JCM 10099 / NBRC 100826 / MSB8).